A 537-amino-acid polypeptide reads, in one-letter code: Fusion glycoprotein F0 (537 aa).

Residues 1 to 21 (MIPGRIFLVLLVIFNTKPIHP) form the signal peptide. Over 26–486 (EKYYESTCSV…DLSENRENKN (461 aa)) the chain is Extracellular. 7 cysteine pairs are disulfide-bonded: Cys-33–Cys-402, Cys-65–Cys-177, Cys-278–Cys-306, Cys-287–Cys-296, Cys-321–Cys-330, Cys-345–Cys-356, and Cys-379–Cys-385. Positions 102-122 (FLGLILGLGAAVTAGVALAKT) are fusion peptide. Positions 120 to 174 (AKTVQLESEIALIRDAVRNTNEAVVSLTNGMSVLAKVVDDLKNFISKELLPKINR) form a coiled coil. The stretch at 444 to 479 (LSFPDDKFDVAIRDVEHSINQTRTFFKASDQLLDLS) forms a coiled coil. The N-linked (GlcNAc...) asparagine; by host glycan is linked to Asn-463. Residues 487–515 (LNKSYILTTLLFVVMLIIIMAVIGFILYK) traverse the membrane as a helical segment. The Cytoplasmic segment spans residues 516–537 (VLKMIRDNKLKSKSTPGLTVLS).

This sequence belongs to the paramyxoviruses fusion glycoprotein family. In terms of assembly, homotrimer. Heterodimer with fusion protein F2; disulfide-linked. Part of a complex composed of F1, F2 and G glycoproteins. As to quaternary structure, homotrimer. Heterodimer with fusion protein F1; disulfide-linked. Part of a complex composed of F1, F2 and G glycoproteins. Post-translationally, the F glycoprotein is synthesized as a F0 inactive precursor that is heavily N-glycosylated and processed by a host furin-like protease probably in the Golgi.

Its subcellular location is the host Golgi apparatus membrane. It is found in the virion membrane. It localises to the host cell membrane. Functionally, inactive precursor that is cleaved by a furin-like protease to give rise to the mature F1 and F2 fusion glycoproteins. Its function is as follows. Class I viral fusion protein. Under the current model, the protein has at least 3 conformational states: pre-fusion native state, pre-hairpin intermediate state, and post-fusion hairpin state. During viral and plasma cell membrane fusion, the coiled coil regions assume a trimer-of-hairpins structure, positioning the fusion peptide in close proximity to the C-terminal region of the ectodomain. The formation of this structure appears to drive apposition and subsequent fusion of viral and cellular membranes leading to delivery of the nucleocapsid into the cytoplasm. This fusion is pH independent and occurs at the plasma or endosomal membrane. The trimer of F1-F2 (F protein) also facilitates the attachment and entry into the host cell. Later in infection, F protein expressed at the plasma membrane of infected cells can mediate fusion with adjacent cells to form syncytia, a cytopathic effect that could lead to tissue necrosis. In terms of biological role, major determinant of the species specificity of RSV infection. The trimer of F1-F2 (F protein) also facilitates the attachment and entry into the host cell. Later in infection, F protein expressed at the plasma membrane of infected cells can mediate fusion with adjacent cells to form syncytia, a cytopathic effect that could lead to tissue necrosis. The polypeptide is Fusion glycoprotein F0 (F) (Mus musculus (Mouse)).